Reading from the N-terminus, the 405-residue chain is L-carnitine CoA-transferase (405 aa).

Positions 97 and 104 each coordinate CoA. D169 serves as the catalytic Nucleophile.

The protein belongs to the CoA-transferase III family. CaiB subfamily. In terms of assembly, homodimer.

The protein localises to the cytoplasm. The enzyme catalyses crotonobetainyl-CoA + (R)-carnitine = crotonobetaine + (R)-carnitinyl-CoA. It carries out the reaction 4-(trimethylamino)butanoyl-CoA + (R)-carnitine = (R)-carnitinyl-CoA + 4-(trimethylamino)butanoate. Its pathway is amine and polyamine metabolism; carnitine metabolism. Its function is as follows. Catalyzes the reversible transfer of the CoA moiety from gamma-butyrobetainyl-CoA to L-carnitine to generate L-carnitinyl-CoA and gamma-butyrobetaine. Is also able to catalyze the reversible transfer of the CoA moiety from gamma-butyrobetainyl-CoA or L-carnitinyl-CoA to crotonobetaine to generate crotonobetainyl-CoA. In Escherichia fergusonii (strain ATCC 35469 / DSM 13698 / CCUG 18766 / IAM 14443 / JCM 21226 / LMG 7866 / NBRC 102419 / NCTC 12128 / CDC 0568-73), this protein is L-carnitine CoA-transferase.